The primary structure comprises 1071 residues: Exportin-1 (1071 aa).

The region spanning 46–112 is the Importin N-terminal domain; the sequence is AQEVLTHLKE…KKYVVGLIIK (67 aa). HEAT repeat units lie at residues 217 to 240, 241 to 277, 354 to 472, 515 to 553, 560 to 597, and 602 to 639; these read QNAP…PLGY, IFET…VSVS, MLLV…YVDT, RFLV…QYPR, KFLK…KCRR, and VQVG…AVGY. The tract at residues 327–450 is necessary for interaction with Ran and nuclear export complex formation; that stretch reads CTFLKEHGQL…VREFMKDTDS (124 aa). Ser391 carries the post-translational modification Phosphoserine. Positions 411–481 are necessary for interaction with RANBP3; that stretch reads TVLSKVRLLM…TEIIMTKKLQ (71 aa). Position 446 is an N6-acetyllysine (Lys446). Thr448 is subject to Phosphothreonine. Phosphoserine is present on Ser450. The residue at position 454 (Tyr454) is a Phosphotyrosine. The residue at position 693 (Lys693) is an N6-acetyllysine. HEAT repeat units lie at residues 775 to 813, 885 to 916, and 917 to 954; these read NFVP…KLGG, TMRN…SFYQ, and TYFC…NLVE. Ser966 and Ser1031 each carry phosphoserine. One copy of the HEAT 10 repeat lies at 1002 to 1039; the sequence is FSLNQDIPAFKEHLRDFLVQIKEFAGEDTSDLFLEERE.

It belongs to the exportin family. As to quaternary structure, found in a U snRNA export complex with PHAX/RNUXA, NCBP1/CBP80, NCBP2/CBP20, RAN, XPO1 and m7G-capped RNA. Component of a nuclear export receptor complex composed of KPNB1, RAN, SNUPN and XPO1. Found in a trimeric export complex with SNUPN, RAN and XPO1. Found in a nuclear export complex with RANBP3 and RAN. Found in a 60S ribosomal subunit export complex with NMD3, RAN, XPO1. Interacts with DDX3X, NMD3, NUP42, NUP88, NUP214, RANBP3 and TERT. Interacts with NEMF (via its N-terminus). Interacts with the monomeric form of BIRC5/survivin deacetylated at 'Lys-129'. Interacts with DTNBP1 and SERTAD2; the interactions translocate DTNBP1 and SERTAD2 out of the nucleus. Interacts with ATF2. Interacts with SLC35G1 and STIM1. Interacts with DCAF8. Interacts with CPEB3. Interacts with HAX1. Interacts with BOK; translocates to the cytoplasm. Interacts with HSP90AB1. Interacts with LRPPRC; interacts with LRPPRC alone and also when LRPPRC is in complex with EIF4E and with EIF4E sensitivity element (4ESE)-containing mRNAs to form an EIF4E-dependent mRNA export complex.

It is found in the cytoplasm. The protein resides in the nucleus. The protein localises to the nucleoplasm. It localises to the cajal body. Its subcellular location is the nucleolus. Mediates the nuclear export of cellular proteins (cargos) bearing a leucine-rich nuclear export signal (NES) and of RNAs. In the nucleus, in association with RANBP3, binds cooperatively to the NES on its target protein and to the GTPase Ran in its active GTP-bound form. Docking of this complex to the nuclear pore complex (NPC) is mediated through binding to nucleoporins. Upon transit of a nuclear export complex into the cytoplasm, disassembling of the complex and hydrolysis of Ran-GTP to Ran-GDP (induced by RANBP1 and RANGAP1, respectively) cause release of the cargo from the export receptor. The directionality of nuclear export is thought to be conferred by an asymmetric distribution of the GTP- and GDP-bound forms of Ran between the cytoplasm and nucleus. Involved in U3 snoRNA transport from Cajal bodies to nucleoli. Binds to late precursor U3 snoRNA bearing a TMG cap. This chain is Exportin-1 (Xpo1), found in Rattus norvegicus (Rat).